The sequence spans 700 residues: Elongation factor G (700 aa).

The tr-type G domain maps to 10 to 286 (TKVRNIGIMA…AVIDYLPNPL (277 aa)). Residues 19–26 (AHIDAGKT), 83–87 (DTPGH), and 137–140 (NKMD) each bind GTP.

It belongs to the TRAFAC class translation factor GTPase superfamily. Classic translation factor GTPase family. EF-G/EF-2 subfamily.

The protein resides in the cytoplasm. Functionally, catalyzes the GTP-dependent ribosomal translocation step during translation elongation. During this step, the ribosome changes from the pre-translocational (PRE) to the post-translocational (POST) state as the newly formed A-site-bound peptidyl-tRNA and P-site-bound deacylated tRNA move to the P and E sites, respectively. Catalyzes the coordinated movement of the two tRNA molecules, the mRNA and conformational changes in the ribosome. The protein is Elongation factor G of Mycolicibacterium vanbaalenii (strain DSM 7251 / JCM 13017 / BCRC 16820 / KCTC 9966 / NRRL B-24157 / PYR-1) (Mycobacterium vanbaalenii).